The following is a 471-amino-acid chain: Iroquois-class homeodomain protein IRX-2 (471 aa).

The segment at residues 112–175 is a DNA-binding region (homeobox; TALE-type); sequence LNDPAYRKNA…ANARRRLKKE (64 aa). 2 disordered regions span residues 176 to 373 and 424 to 471; these read NKMT…SPYP and APKA…QPYL. The residue at position 186 (serine 186) is a Phosphoserine. A compositionally biased stretch (basic and acidic residues) spans 195–209; it reads DATRSKDESPDKAQE. The span at 261–273 shows a compositional bias: acidic residues; it reads DDLEDDEDDDEEG. A compositionally biased stretch (low complexity) spans 355–367; that stretch reads PAAAAPASTGAPP. Positions 462–471 are enriched in gly residues; the sequence is VVGGGVQPYL.

The protein belongs to the TALE/IRO homeobox family.

The protein localises to the nucleus. The protein is Iroquois-class homeodomain protein IRX-2 (IRX2) of Homo sapiens (Human).